We begin with the raw amino-acid sequence, 87 residues long: Toxin Cll5c (87 aa).

The first 19 residues, 1–19 (MNSLLMITACLVLFGTVWA), serve as a signal peptide directing secretion. The LCN-type CS-alpha/beta domain occupies 20–85 (KEGYLVNKST…TYPLPNKSCS (66 aa)). 4 disulfides stabilise this stretch: Cys31/Cys84, Cys35/Cys60, Cys44/Cys65, and Cys48/Cys67. A propeptide spans 86–87 (KK) (removed by a carboxypeptidase).

This sequence belongs to the long (4 C-C) scorpion toxin superfamily. Sodium channel inhibitor family. Beta subfamily. Expressed by the venom gland.

It is found in the secreted. In terms of biological role, beta toxins bind voltage-independently at site-4 of sodium channels (Nav) and shift the voltage of activation toward more negative potentials thereby affecting sodium channel activation and promoting spontaneous and repetitive firing. The polypeptide is Toxin Cll5c (Centruroides limpidus (Mexican scorpion)).